The primary structure comprises 348 residues: Nuclear receptor subfamily 1 group I member 3 (348 aa).

Residues 8–83 constitute a DNA-binding region (nuclear receptor); that stretch reads LRNCVVCGDQ…AGMRKDMILS (76 aa). Residues 11–31 form an NR C4-type zinc finger; it reads CVVCGDQATGYHFNALTCEGC. Thr38 carries the phosphothreonine; by PKC modification. The segment at 47–71 adopts an NR C4-type zinc-finger fold; the sequence is CPFAGSCEVSKTQRRHCPACRLQKC. The NR LBD domain occupies 109–348; the sequence is EQEELIRTLL…MMPLLQEICS (240 aa).

This sequence belongs to the nuclear hormone receptor family. NR1 subfamily. Heterodimer of NR1I3 and RXR. Interacts with PSMC4. Interacts with ECT2. Directly interacts with DNAJC7; this complex may also include HSP90. Interacts with CRY1. Interacts with CRY2 in a ligand-dependent manner. Phosphorylated at Thr-38 by PKC, dephosphorylation of Thr-38 is required for nuclear translocation and activation.

The protein localises to the nucleus. Its subcellular location is the cytoplasm. The protein resides in the cytoskeleton. Binds and transactivates the retinoic acid response elements that control expression of the retinoic acid receptor beta 2 and alcohol dehydrogenase 3 genes. Transactivates both the phenobarbital responsive element module of the human CYP2B6 gene and the CYP3A4 xenobiotic response element. The chain is Nuclear receptor subfamily 1 group I member 3 (NR1I3) from Pan troglodytes (Chimpanzee).